Here is a 426-residue protein sequence, read N- to C-terminus: Gamma-glutamyl phosphate reductase (426 aa).

It belongs to the gamma-glutamyl phosphate reductase family.

It is found in the cytoplasm. It catalyses the reaction L-glutamate 5-semialdehyde + phosphate + NADP(+) = L-glutamyl 5-phosphate + NADPH + H(+). Its pathway is amino-acid biosynthesis; L-proline biosynthesis; L-glutamate 5-semialdehyde from L-glutamate: step 2/2. Its function is as follows. Catalyzes the NADPH-dependent reduction of L-glutamate 5-phosphate into L-glutamate 5-semialdehyde and phosphate. The product spontaneously undergoes cyclization to form 1-pyrroline-5-carboxylate. The chain is Gamma-glutamyl phosphate reductase from Nitrobacter winogradskyi (strain ATCC 25391 / DSM 10237 / CIP 104748 / NCIMB 11846 / Nb-255).